The chain runs to 257 residues: Type III pantothenate kinase (257 aa).

6-13 is a binding site for ATP; it reads DAGNTNIV. Residues tyrosine 100 and 107–110 each bind substrate; that span reads GADR. The Proton acceptor role is filled by aspartate 109. Aspartate 129 contributes to the K(+) binding site. ATP is bound at residue threonine 132. Residue threonine 184 coordinates substrate.

It belongs to the type III pantothenate kinase family. In terms of assembly, homodimer. Requires NH4(+) as cofactor. K(+) is required as a cofactor.

It is found in the cytoplasm. It catalyses the reaction (R)-pantothenate + ATP = (R)-4'-phosphopantothenate + ADP + H(+). Its pathway is cofactor biosynthesis; coenzyme A biosynthesis; CoA from (R)-pantothenate: step 1/5. Catalyzes the phosphorylation of pantothenate (Pan), the first step in CoA biosynthesis. This chain is Type III pantothenate kinase, found in Clostridium botulinum (strain Alaska E43 / Type E3).